We begin with the raw amino-acid sequence, 335 residues long: Taste receptor type 2 member 119 (335 aa).

The Extracellular segment spans residues 1–7 (MMEGHML). A helical transmembrane segment spans residues 8-28 (FFLLVVVVQFLTGVLANGLIV). Residues 29-43 (VVNAIDLIMWKKMAP) are Cytoplasmic-facing. A helical membrane pass occupies residues 44-64 (LDLLLFCLATSRIILQLCILF). The Extracellular portion of the chain corresponds to 65 to 81 (AQLGLSCLVRHTLFADN). Asparagine 81 carries an N-linked (GlcNAc...) asparagine glycan. The chain crosses the membrane as a helical span at residues 82 to 102 (VTFVYIINELSLWFATWLGVF). The Cytoplasmic segment spans residues 103-124 (YCAKIATIPHPLFLWLKMRISR). The chain crosses the membrane as a helical span at residues 125 to 145 (LVPWLILASVVYVTVTTFIHS). Topologically, residues 146–176 (RETSELPKQIFISFFSKNTTRVRPAHATLLS) are extracellular. The N-linked (GlcNAc...) asparagine glycan is linked to asparagine 163. A helical transmembrane segment spans residues 177-197 (VFVFGLTLPFLIFTVAVLLLL). The Cytoplasmic portion of the chain corresponds to 198–224 (SSLWNHSRQMRTMVGTREPSRHALVSA). Residues 225–245 (MLSILSFLILYLSHDMVAVLI) form a helical membrane-spanning segment. The Extracellular segment spans residues 246–256 (CTQGLHFGSRT). The helical transmembrane segment at 257–277 (FAFCLLVIGMYPSLHSIVLIL) threads the bilayer. Topologically, residues 278–335 (GNPKLKRNAKTFIVHCKCCHCARAWVTSRNPRLSDLPVPATHHSANKTSCSEACIMPS) are cytoplasmic.

The protein belongs to the G-protein coupled receptor T2R family. Expressed in subsets of taste receptor cells of the tongue and palate epithelium and exclusively in gustducin-positive cells. Expressed in 15% taste bud cells in circumvallate and foliate papillae but only in 2% in fungiform papillae. Expressed in the gastro and duodenal tissue. Not expressed in colon, liver, heart and kidney.

Its subcellular location is the membrane. Gustducin-coupled receptor implicated in the perception of bitter compounds in the oral cavity and the gastrointestinal tract. Signals through PLCB2 and the calcium-regulated cation channel TRPM5. This chain is Taste receptor type 2 member 119 (Tas2r119), found in Mus musculus (Mouse).